The following is a 122-amino-acid chain: MASFLQRLVDPRKNFLARMHMKSVSNRLRRYGLRYDDLYDPLYDLDIKEALNRLPREIVDARNQRLMRAMDLSMKHEYLPDNLQAVQTPFRSYLQDMLALVKRERAEREALGALPLYQRTIP.

It belongs to the UQCRB/QCR7 family. In terms of assembly, component of the ubiquinol-cytochrome c oxidoreductase (cytochrome b-c1 complex, complex III, CIII), a multisubunit enzyme composed of 10 subunits. The complex is composed of 3 respiratory subunits cytochrome b (MT-CYB), cytochrome c1 (CYC1-1 or CYC1-2) and Rieske protein (UCR1-1 or UCR1-2), 2 core protein subunits MPPalpha1 (or MPPalpha2) and MPPB, and 5 low-molecular weight protein subunits QCR7-1 (or QCR7-2), UCRQ-1 (or UCRQ-2), QCR9, UCRY and probably QCR6-1 (or QCR6-2). The complex exists as an obligatory dimer and forms supercomplexes (SCs) in the inner mitochondrial membrane with NADH-ubiquinone oxidoreductase (complex I, CI), resulting in different assemblies (supercomplexes SCI(1)III(2) and SCI(2)III(4)).

It localises to the mitochondrion inner membrane. Its function is as follows. Component of the ubiquinol-cytochrome c oxidoreductase, a multisubunit transmembrane complex that is part of the mitochondrial electron transport chain which drives oxidative phosphorylation. The respiratory chain contains 3 multisubunit complexes succinate dehydrogenase (complex II, CII), ubiquinol-cytochrome c oxidoreductase (cytochrome b-c1 complex, complex III, CIII) and cytochrome c oxidase (complex IV, CIV), that cooperate to transfer electrons derived from NADH and succinate to molecular oxygen, creating an electrochemical gradient over the inner membrane that drives transmembrane transport and the ATP synthase. The cytochrome b-c1 complex catalyzes electron transfer from ubiquinol to cytochrome c, linking this redox reaction to translocation of protons across the mitochondrial inner membrane, with protons being carried across the membrane as hydrogens on the quinol. In the process called Q cycle, 2 protons are consumed from the matrix, 4 protons are released into the intermembrane space and 2 electrons are passed to cytochrome c. This is Cytochrome b-c1 complex subunit 7-2, mitochondrial (QCR7-2) from Arabidopsis thaliana (Mouse-ear cress).